We begin with the raw amino-acid sequence, 566 residues long: 3'-5' exoribonuclease parn-1 (566 aa).

The a divalent metal cation site is built by Asp-29, Glu-31, Asp-283, and Asp-379.

This sequence belongs to the CAF1 family. The cofactor is a divalent metal cation. In terms of tissue distribution, expressed in germline cells.

The protein localises to the cytoplasm. Functionally, involved in transcriptome surveillance. Required for piwi-interacting RNAs (piRNAs) 3'-end trimming, which is important for both fertility and piRNA-directed gene silencing. Has 3' to 5' exonuclease activity in vitro. The polypeptide is 3'-5' exoribonuclease parn-1 (Caenorhabditis elegans).